The primary structure comprises 371 residues: tRNA/tmRNA (uracil-C(5))-methyltransferase (371 aa).

Gln-194, Tyr-223, Asn-228, Glu-244, and Asp-304 together coordinate S-adenosyl-L-methionine. Catalysis depends on Cys-329, which acts as the Nucleophile. The Proton acceptor role is filled by Glu-363.

Belongs to the class I-like SAM-binding methyltransferase superfamily. RNA M5U methyltransferase family. TrmA subfamily.

The enzyme catalyses uridine(54) in tRNA + S-adenosyl-L-methionine = 5-methyluridine(54) in tRNA + S-adenosyl-L-homocysteine + H(+). It carries out the reaction uridine(341) in tmRNA + S-adenosyl-L-methionine = 5-methyluridine(341) in tmRNA + S-adenosyl-L-homocysteine + H(+). Functionally, dual-specificity methyltransferase that catalyzes the formation of 5-methyluridine at position 54 (m5U54) in all tRNAs, and that of position 341 (m5U341) in tmRNA (transfer-mRNA). This Sulfurovum sp. (strain NBC37-1) protein is tRNA/tmRNA (uracil-C(5))-methyltransferase.